A 223-amino-acid polypeptide reads, in one-letter code: Ribosome assembly factor mrt4 (223 aa).

The protein belongs to the universal ribosomal protein uL10 family. Associates with the pre-60S ribosomal particle.

Its subcellular location is the nucleus. The protein resides in the nucleolus. It localises to the cytoplasm. In terms of biological role, component of the ribosome assembly machinery. Nuclear paralog of the ribosomal protein P0, it binds pre-60S subunits at an early stage of assembly in the nucleolus, and is replaced by P0 in cytoplasmic pre-60S subunits and mature 80S ribosomes. The polypeptide is Ribosome assembly factor mrt4 (Dictyostelium discoideum (Social amoeba)).